Reading from the N-terminus, the 288-residue chain is Energy-coupling factor transporter ATP-binding protein EcfA2 (288 aa).

Positions 3 to 246 (IKLEQLGYCY…PDALVDLGLS (244 aa)) constitute an ABC transporter domain. Residue 40 to 47 (GHTGSGKS) participates in ATP binding.

The protein belongs to the ABC transporter superfamily. Energy-coupling factor EcfA family. Forms a stable energy-coupling factor (ECF) transporter complex composed of 2 membrane-embedded substrate-binding proteins (S component), 2 ATP-binding proteins (A component) and 2 transmembrane proteins (T component).

The protein localises to the cell membrane. ATP-binding (A) component of a common energy-coupling factor (ECF) ABC-transporter complex. Unlike classic ABC transporters this ECF transporter provides the energy necessary to transport a number of different substrates. The chain is Energy-coupling factor transporter ATP-binding protein EcfA2 from Listeria welshimeri serovar 6b (strain ATCC 35897 / DSM 20650 / CCUG 15529 / CIP 8149 / NCTC 11857 / SLCC 5334 / V8).